We begin with the raw amino-acid sequence, 37 residues long: Large ribosomal subunit protein bL36 (37 aa).

Zn(2+) is bound by residues C11, C14, C27, and H32.

The protein belongs to the bacterial ribosomal protein bL36 family. As to quaternary structure, part of the 50S ribosomal subunit. The cofactor is Zn(2+).

Its function is as follows. Binds the 23S rRNA. The polypeptide is Large ribosomal subunit protein bL36 (rpmJ) (Deinococcus radiodurans (strain ATCC 13939 / DSM 20539 / JCM 16871 / CCUG 27074 / LMG 4051 / NBRC 15346 / NCIMB 9279 / VKM B-1422 / R1)).